The chain runs to 327 residues: Putative D-threonate 4-phosphate dehydrogenase (327 aa).

H139 and T140 together coordinate substrate. The a divalent metal cation site is built by H169, H213, and H268. Residues K276, N285, and R294 each contribute to the substrate site.

It belongs to the PdxA family. PdxA2 subfamily. In terms of assembly, homodimer. Requires a divalent metal cation as cofactor.

It catalyses the reaction 4-O-phospho-D-threonate + NAD(+) = dihydroxyacetone phosphate + CO2 + NADH. In terms of biological role, catalyzes the NAD-dependent oxidation and subsequent decarboxylation of D-threonate 4-phosphate to produce dihydroxyacetone phosphate (DHAP). The polypeptide is Putative D-threonate 4-phosphate dehydrogenase (Salmonella typhi).